We begin with the raw amino-acid sequence, 465 residues long: Probable Xaa-Pro aminopeptidase pepP (465 aa).

4 residues coordinate Mn(2+): aspartate 261, aspartate 272, glutamate 395, and glutamate 435.

The protein belongs to the peptidase M24B family. Mn(2+) serves as cofactor.

The enzyme catalyses Release of any N-terminal amino acid, including proline, that is linked to proline, even from a dipeptide or tripeptide.. In terms of biological role, catalyzes the removal of a penultimate prolyl residue from the N-termini of peptides. The sequence is that of Probable Xaa-Pro aminopeptidase pepP (pepP) from Talaromyces marneffei (strain ATCC 18224 / CBS 334.59 / QM 7333) (Penicillium marneffei).